A 501-amino-acid polypeptide reads, in one-letter code: L-arabinose isomerase (501 aa).

Mn(2+) is bound by residues E306, E333, H350, and H449.

It belongs to the arabinose isomerase family. Mn(2+) serves as cofactor.

The enzyme catalyses beta-L-arabinopyranose = L-ribulose. Its pathway is carbohydrate degradation; L-arabinose degradation via L-ribulose; D-xylulose 5-phosphate from L-arabinose (bacterial route): step 1/3. In terms of biological role, catalyzes the conversion of L-arabinose to L-ribulose. This Mycolicibacterium smegmatis (strain ATCC 700084 / mc(2)155) (Mycobacterium smegmatis) protein is L-arabinose isomerase.